A 278-amino-acid chain; its full sequence is HTH-type transcriptional activator RhaS (278 aa).

Positions 174–272 (NQLMAWLEDH…NWSPRDIRQG (99 aa)) constitute an HTH araC/xylS-type domain. DNA-binding regions (H-T-H motif) lie at residues 191 to 212 (EAVA…KQHT) and 239 to 262 (VTEI…RREF).

Binds DNA as a dimer.

The protein localises to the cytoplasm. Activates expression of the rhaBAD and rhaT operons. The polypeptide is HTH-type transcriptional activator RhaS (Salmonella paratyphi A (strain ATCC 9150 / SARB42)).